A 547-amino-acid polypeptide reads, in one-letter code: CTP synthase (547 aa).

The amidoligase domain stretch occupies residues 1–267 (MTKFVFVTGG…AQQTLALLNL (267 aa)). Residue S13 coordinates CTP. S13 is a binding site for UTP. Residues 14–19 (SIGKGI) and D71 contribute to the ATP site. Mg(2+)-binding residues include D71 and E141. CTP is bound by residues 148 to 150 (DIE), 188 to 193 (KTKPTQ), and K224. UTP is bound by residues 188–193 (KTKPTQ) and K224. Positions 292-534 (EIALVGKYVQ…VKAAVDHYST (243 aa)) constitute a Glutamine amidotransferase type-1 domain. G354 is a binding site for L-glutamine. C381 functions as the Nucleophile; for glutamine hydrolysis in the catalytic mechanism. L-glutamine-binding positions include 382-385 (LGMQ), E405, and R462. Active-site residues include H507 and E509.

It belongs to the CTP synthase family. In terms of assembly, homotetramer.

It carries out the reaction UTP + L-glutamine + ATP + H2O = CTP + L-glutamate + ADP + phosphate + 2 H(+). It catalyses the reaction L-glutamine + H2O = L-glutamate + NH4(+). The enzyme catalyses UTP + NH4(+) + ATP = CTP + ADP + phosphate + 2 H(+). The protein operates within pyrimidine metabolism; CTP biosynthesis via de novo pathway; CTP from UDP: step 2/2. With respect to regulation, allosterically activated by GTP, when glutamine is the substrate; GTP has no effect on the reaction when ammonia is the substrate. The allosteric effector GTP functions by stabilizing the protein conformation that binds the tetrahedral intermediate(s) formed during glutamine hydrolysis. Inhibited by the product CTP, via allosteric rather than competitive inhibition. Catalyzes the ATP-dependent amination of UTP to CTP with either L-glutamine or ammonia as the source of nitrogen. Regulates intracellular CTP levels through interactions with the four ribonucleotide triphosphates. This is CTP synthase from Rippkaea orientalis (strain PCC 8801 / RF-1) (Cyanothece sp. (strain PCC 8801)).